Here is a 159-residue protein sequence, read N- to C-terminus: 2-C-methyl-D-erythritol 2,4-cyclodiphosphate synthase (159 aa).

The a divalent metal cation site is built by D8 and H10. 4-CDP-2-C-methyl-D-erythritol 2-phosphate is bound by residues 8–10 (DVH) and 34–35 (HS). Residue H42 participates in a divalent metal cation binding. 4-CDP-2-C-methyl-D-erythritol 2-phosphate-binding positions include 56–58 (DIG), 100–106 (AQAPKMA), 132–135 (TTTE), F139, and R142.

This sequence belongs to the IspF family. Homotrimer. A divalent metal cation serves as cofactor.

It catalyses the reaction 4-CDP-2-C-methyl-D-erythritol 2-phosphate = 2-C-methyl-D-erythritol 2,4-cyclic diphosphate + CMP. Its pathway is isoprenoid biosynthesis; isopentenyl diphosphate biosynthesis via DXP pathway; isopentenyl diphosphate from 1-deoxy-D-xylulose 5-phosphate: step 4/6. Involved in the biosynthesis of isopentenyl diphosphate (IPP) and dimethylallyl diphosphate (DMAPP), two major building blocks of isoprenoid compounds. Catalyzes the conversion of 4-diphosphocytidyl-2-C-methyl-D-erythritol 2-phosphate (CDP-ME2P) to 2-C-methyl-D-erythritol 2,4-cyclodiphosphate (ME-CPP) with a corresponding release of cytidine 5-monophosphate (CMP). The chain is 2-C-methyl-D-erythritol 2,4-cyclodiphosphate synthase from Marinobacter nauticus (strain ATCC 700491 / DSM 11845 / VT8) (Marinobacter aquaeolei).